A 45-amino-acid chain; its full sequence is Phospholipase A2 3 (45 aa).

Residues Tyr-20, Gly-24, and Gly-25 each coordinate Ca(2+). Cys-21 and Cys-36 form a disulfide bridge. The active site involves His-39. Asp-40 is a Ca(2+) binding site.

Ca(2+) is required as a cofactor. Expressed by the venom gland.

It localises to the secreted. It carries out the reaction a 1,2-diacyl-sn-glycero-3-phosphocholine + H2O = a 1-acyl-sn-glycero-3-phosphocholine + a fatty acid + H(+). In terms of biological role, PLA2 catalyzes the calcium-dependent hydrolysis of the 2-acyl groups in 3-sn-phosphoglycerides. The sequence is that of Phospholipase A2 3 from Bothrops diporus (Chaco lancehead).